A 463-amino-acid polypeptide reads, in one-letter code: Argininosuccinate lyase (463 aa).

It belongs to the lyase 1 family. Argininosuccinate lyase subfamily.

It is found in the cytoplasm. It catalyses the reaction 2-(N(omega)-L-arginino)succinate = fumarate + L-arginine. The protein operates within amino-acid biosynthesis; L-arginine biosynthesis; L-arginine from L-ornithine and carbamoyl phosphate: step 3/3. The chain is Argininosuccinate lyase from Methylorubrum populi (strain ATCC BAA-705 / NCIMB 13946 / BJ001) (Methylobacterium populi).